We begin with the raw amino-acid sequence, 87 residues long: MSETDSQETAPQGDLPDFERSVAELEALIERMERGEQTLEEALRDFERGIHLTRHCQKALSAAEQKVAILLENSEDGDVGPFRPDDS.

This sequence belongs to the XseB family. As to quaternary structure, heterooligomer composed of large and small subunits.

The protein resides in the cytoplasm. The enzyme catalyses Exonucleolytic cleavage in either 5'- to 3'- or 3'- to 5'-direction to yield nucleoside 5'-phosphates.. Its function is as follows. Bidirectionally degrades single-stranded DNA into large acid-insoluble oligonucleotides, which are then degraded further into small acid-soluble oligonucleotides. The polypeptide is Exodeoxyribonuclease 7 small subunit (Halorhodospira halophila (strain DSM 244 / SL1) (Ectothiorhodospira halophila (strain DSM 244 / SL1))).